A 141-amino-acid polypeptide reads, in one-letter code: Translation initiation factor 2 subunit beta (141 aa).

It belongs to the eIF-2-beta/eIF-5 family. As to quaternary structure, heterotrimer composed of an alpha, a beta and a gamma chain.

Functionally, eIF-2 functions in the early steps of protein synthesis by forming a ternary complex with GTP and initiator tRNA. The protein is Translation initiation factor 2 subunit beta of Sulfolobus acidocaldarius (strain ATCC 33909 / DSM 639 / JCM 8929 / NBRC 15157 / NCIMB 11770).